A 460-amino-acid polypeptide reads, in one-letter code: UDP-N-acetylmuramoyl-tripeptide--D-alanyl-D-alanine ligase (460 aa).

Residue 115-121 (GSSGKTS) participates in ATP binding.

The protein belongs to the MurCDEF family. MurF subfamily.

It is found in the cytoplasm. The catalysed reaction is D-alanyl-D-alanine + UDP-N-acetyl-alpha-D-muramoyl-L-alanyl-gamma-D-glutamyl-meso-2,6-diaminopimelate + ATP = UDP-N-acetyl-alpha-D-muramoyl-L-alanyl-gamma-D-glutamyl-meso-2,6-diaminopimeloyl-D-alanyl-D-alanine + ADP + phosphate + H(+). It functions in the pathway cell wall biogenesis; peptidoglycan biosynthesis. Involved in cell wall formation. Catalyzes the final step in the synthesis of UDP-N-acetylmuramoyl-pentapeptide, the precursor of murein. This chain is UDP-N-acetylmuramoyl-tripeptide--D-alanyl-D-alanine ligase, found in Buchnera aphidicola subsp. Baizongia pistaciae (strain Bp).